Consider the following 326-residue polypeptide: L-threo-3-hydroxyaspartate ammonia-lyase (326 aa).

Position 53 is an N6-(pyridoxal phosphate)lysine (K53). Pyridoxal 5'-phosphate-binding positions include N80, 179–183, and S304; that span reads GGGGL.

This sequence belongs to the serine/threonine dehydratase family. In terms of assembly, monomer. The cofactor is pyridoxal 5'-phosphate. Mn(2+) serves as cofactor. Requires Mg(2+) as cofactor. It depends on Ca(2+) as a cofactor.

It catalyses the reaction (3S)-3-hydroxy-L-aspartate = oxaloacetate + NH4(+). With respect to regulation, is strongly inhibited by hydroxylamine and EDTA in vitro. Its function is as follows. Catalyzes the deamination of L-threo-3-hydroxyaspartate to oxaloacetate and ammonia. Shows a high specificity towards L-threo-3-hydroxyaspartate as other 3-hydroxyaminoacids, i.e. D,L-erythro- and D-threo-3-hydroxyaspartate, D-threonine, L-threonine, D,L-allothreonine, D-serine, and L-serine, are not substrates for this enzyme. Exhibits no detectable serine racemase activity. Is responsible for the 3-hydroxyaspartate resistance of S.cerevisiae, and thus may be involved in the detoxification of naturally occurring 3-hydroxyaspartate. This is L-threo-3-hydroxyaspartate ammonia-lyase (SRY1) from Saccharomyces cerevisiae (strain ATCC 204508 / S288c) (Baker's yeast).